The chain runs to 112 residues: Tyrosine-protein phosphatase 7 (112 aa).

Positions 1 to 112 (NNVTIIVMIT…SSPESGPIVV (112 aa)) constitute a Tyrosine-protein phosphatase domain. Asp82 lines the substrate pocket.

This sequence belongs to the protein-tyrosine phosphatase family.

The enzyme catalyses O-phospho-L-tyrosyl-[protein] + H2O = L-tyrosyl-[protein] + phosphate. This is Tyrosine-protein phosphatase 7 (STY-7) from Styela plicata (Wrinkled sea squirt).